Here is a 441-residue protein sequence, read N- to C-terminus: Transcriptional regulatory protein ZraR (441 aa).

The Response regulatory domain maps to 7–121; it reads DILVVDDDVS…RLQETLEKAL (115 aa). Residue Asp56 is modified to 4-aspartylphosphate. In terms of domain architecture, Sigma-54 factor interaction spans 141-370; that stretch reads MIGSSPAMQH…LENAIERAVV (230 aa). Residues Gly172, Thr173, Arg329, and Arg359 each coordinate ATP. Residues 421–440 constitute a DNA-binding region (H-T-H motif); sequence KTEAARQLGITRKTLLAKLS.

Forms homohexamers in the crystal structure. However, the dimerization interface between DNA-binding domains observed in the crystal structure suggests that dodecamers, rather than hexamers, might be the functionally important oligomer. Post-translationally, phosphorylated by ZraS.

The protein localises to the cytoplasm. Activity of the ZraS/ZraR two-component system is repressed by the zinc-bound form of ZraP, which probably interacts with the periplasmic region of ZraS. In terms of biological role, part of the Zra signaling pathway, an envelope stress response (ESR) system composed of the periplasmic accessory protein ZraP, the histidine kinase ZraS and the transcriptional regulator ZraR. The ZraPSR system contributes to antibiotic resistance and is important for membrane integrity in the presence of membrane-targeting biocides. ZraR is a member of the two-component regulatory system ZraS/ZraR. When activated by ZraS, acts in conjunction with sigma-54 to regulate the expression of zraP in the presence of high Zn(2+) or Pb(2+) concentrations. Also positively autoregulates the expression of the zraSR operon. The protein is Transcriptional regulatory protein ZraR of Salmonella typhimurium (strain LT2 / SGSC1412 / ATCC 700720).